We begin with the raw amino-acid sequence, 117 residues long: DNA-directed RNA polymerase subunit omega (117 aa).

Residues 96 to 105 show a composition bias toward basic and acidic residues; the sequence is KEEAEEEAKQ. The interval 96-117 is disordered; sequence KEEAEEEAKQKNSRAAKAAAAE. The segment covering 108 to 117 has biased composition (low complexity); the sequence is SRAAKAAAAE.

The protein belongs to the RNA polymerase subunit omega family. In terms of assembly, the RNAP catalytic core consists of 2 alpha, 1 beta, 1 beta' and 1 omega subunit. When a sigma factor is associated with the core the holoenzyme is formed, which can initiate transcription.

It carries out the reaction RNA(n) + a ribonucleoside 5'-triphosphate = RNA(n+1) + diphosphate. Promotes RNA polymerase assembly. Latches the N- and C-terminal regions of the beta' subunit thereby facilitating its interaction with the beta and alpha subunits. This Lactococcus lactis subsp. lactis (strain IL1403) (Streptococcus lactis) protein is DNA-directed RNA polymerase subunit omega (rpoZ).